The sequence spans 292 residues: UDP-N-acetylenolpyruvoylglucosamine reductase (292 aa).

Positions 27–188 (KIGGPVRLFI…LRVGFRIIKG (162 aa)) constitute an FAD-binding PCMH-type domain. The active site involves arginine 166. Serine 217 (proton donor) is an active-site residue. Glutamate 288 is an active-site residue.

The protein belongs to the MurB family. It depends on FAD as a cofactor.

Its subcellular location is the cytoplasm. It carries out the reaction UDP-N-acetyl-alpha-D-muramate + NADP(+) = UDP-N-acetyl-3-O-(1-carboxyvinyl)-alpha-D-glucosamine + NADPH + H(+). It participates in cell wall biogenesis; peptidoglycan biosynthesis. Its function is as follows. Cell wall formation. This is UDP-N-acetylenolpyruvoylglucosamine reductase from Thermosipho melanesiensis (strain DSM 12029 / CIP 104789 / BI429).